Here is a 610-residue protein sequence, read N- to C-terminus: Chitinase 63 (610 aa).

An N-terminal signal peptide occupies residues 1–30 (MRFRHKAAALAATLALPLAGLVGLASPAQA). In terms of domain architecture, CBM2 spans 31–134 (ATSATATFQK…KINGGSCDGS (104 aa)). 2 disordered regions span residues 125–153 (KINGGSCDGSSVPGDEAPSAPGTPTASNI) and 208–239 (ARDTGDQTGPASGSVKVTTTGGDGGEPNPNPG). In terms of domain architecture, Fibronectin type-III spans 144 to 229 (APGTPTASNI…GSVKVTTTGG (86 aa)). Residues 213–224 (DQTGPASGSVKV) are compositionally biased toward polar residues. The 370-residue stretch at 241–610 (EVKMGYFTNW…LVSAIDSGLK (370 aa)) folds into the GH18 domain. Residues 313-314 (DQ) and 340-343 (GGWT) each bind chitin. Catalysis depends on glutamate 383, which acts as the Proton donor. Chitin is bound by residues tyrosine 384, 450–453 (MTYD), and tryptophan 590.

It belongs to the glycosyl hydrolase 18 family. Chitinase class II subfamily.

The enzyme catalyses Random endo-hydrolysis of N-acetyl-beta-D-glucosaminide (1-&gt;4)-beta-linkages in chitin and chitodextrins.. This Streptomyces plicatus protein is Chitinase 63 (chtA).